Reading from the N-terminus, the 32-residue chain is Alpha-2-macroglobulin homolog (32 aa).

The isoglutamyl cysteine thioester (Cys-Gln) cross-link spans 16–19; sequence CGEQ.

The protein belongs to the protease inhibitor I39 (alpha-2-macroglobulin) family. Homodimer; disulfide-linked.

Its subcellular location is the secreted. Functionally, is able to inhibit all four classes of proteinases by a unique 'trapping' mechanism. This protein has a peptide stretch, called the 'bait region' which contains specific cleavage sites for different proteinases. When a proteinase cleaves the bait region, a conformational change is induced in the protein which traps the proteinase. The entrapped enzyme remains active against low molecular weight substrates (activity against high molecular weight substrates is greatly reduced). Following cleavage in the bait region a thioester bond is hydrolyzed and mediates the covalent binding of the protein to the proteinase. The polypeptide is Alpha-2-macroglobulin homolog (Pacifastacus leniusculus (Signal crayfish)).